A 327-amino-acid chain; its full sequence is uncharacterized protein (327 aa).

Residues 1–17 (MASMAAAIAASRSAVMS) are compositionally biased toward low complexity. Residues 1 to 22 (MASMAAAIAASRSAVMSGNRPL) are disordered. An N-acetylalanine modification is found at A2. Phosphoserine is present on S37. A disordered region spans residues 76-113 (GPRAPAPRDPGDSEELTRFPGLRGPTGQKVVRFGDEDL). Position 129 is a phosphoserine (S129). Polar residues predominate over residues 134 to 148 (SISALSIQEPSNGTA). Residues 134–299 (SISALSIQEP…PDVRQDDGED (166 aa)) form a disordered region. Positions 162–176 (SQALKSSQGSRSSSL) are enriched in low complexity. S175 carries the phosphoserine modification. Composition is skewed to basic and acidic residues over residues 182–202 (TRKEEEASFWKINAERSRGEG) and 233–252 (PAPKDREAKVERPSTLRQEQ). Phosphoserine is present on S289.

The protein resides in the cytoplasm. This is an uncharacterized protein from Homo sapiens (Human).